The chain runs to 119 residues: Large ribosomal subunit protein bL20 (119 aa).

It belongs to the bacterial ribosomal protein bL20 family.

Its function is as follows. Binds directly to 23S ribosomal RNA and is necessary for the in vitro assembly process of the 50S ribosomal subunit. It is not involved in the protein synthesizing functions of that subunit. This chain is Large ribosomal subunit protein bL20, found in Streptococcus thermophilus (strain ATCC BAA-491 / LMD-9).